The chain runs to 91 residues: Large ribosomal subunit protein bL31B (91 aa).

The protein belongs to the bacterial ribosomal protein bL31 family. Type B subfamily. In terms of assembly, part of the 50S ribosomal subunit.

This chain is Large ribosomal subunit protein bL31B, found in Neisseria meningitidis serogroup B (strain ATCC BAA-335 / MC58).